Consider the following 715-residue polypeptide: Dynein axonemal intermediate chain 7 (715 aa).

Positions 291 to 322 (AVSKDLQEENKQENESNSVHEEETKAEGQGDV) are disordered. Positions 295-318 (DLQEENKQENESNSVHEEETKAEG) are enriched in basic and acidic residues.

This sequence belongs to the DNAI7 family. Part of the multisubunit axonemal dynein complex formed at least of two heavy chains and a number of intermediate and light chains. Associates with tubulin. Interacts with microtubule. Ubiquitinated. Ubiquitination leads to its degradation through the 26S proteasome. Ubiquitin-proteasome-mediated DNAI7 degradation occurs in mitosis.

Its subcellular location is the cell projection. It localises to the cilium. The protein localises to the cytoplasm. Its function is as follows. Via its association with the multisubunit axonemal dynein complex, is potentially involved in the regulation of cilia function. May act as a cell cycle regulator. This is Dynein axonemal intermediate chain 7 from Bos taurus (Bovine).